Reading from the N-terminus, the 869-residue chain is Valine--tRNA ligase (869 aa).

The 'HIGH' region signature appears at 47–57 (PYPTGNFHIGN). The 'KMSKS' region signature appears at 521–525 (KMSKS). Lys-524 contacts ATP.

Belongs to the class-I aminoacyl-tRNA synthetase family. ValS type 2 subfamily.

It localises to the cytoplasm. The catalysed reaction is tRNA(Val) + L-valine + ATP = L-valyl-tRNA(Val) + AMP + diphosphate. Its function is as follows. Catalyzes the attachment of valine to tRNA(Val). As ValRS can inadvertently accommodate and process structurally similar amino acids such as threonine, to avoid such errors, it has a 'posttransfer' editing activity that hydrolyzes mischarged Thr-tRNA(Val) in a tRNA-dependent manner. The chain is Valine--tRNA ligase from Methanosarcina barkeri (strain Fusaro / DSM 804).